An 805-amino-acid polypeptide reads, in one-letter code: Polyribonucleotide nucleotidyltransferase (805 aa).

Residues D491 and D497 each contribute to the Mg(2+) site. Residues 558-617 form the KH domain; it reads PRMESMIIDKNKIKNVIGTGGKNVREICEKTGVKIEISQDGTVMIYAVSRDAVEEAKNMI. Positions 627-694 constitute an S1 motif domain; that stretch reads GKVFSGVISE…DKDHVQLSMR (68 aa). The segment at 702–805 is disordered; the sequence is DLLEHESYSS…GGGNKKPRFF (104 aa). The span at 709–721 shows a compositional bias: polar residues; the sequence is YSSSKKNGPQSGD.

The protein belongs to the polyribonucleotide nucleotidyltransferase family. Mg(2+) is required as a cofactor.

Its subcellular location is the cytoplasm. The catalysed reaction is RNA(n+1) + phosphate = RNA(n) + a ribonucleoside 5'-diphosphate. In terms of biological role, involved in mRNA degradation. Catalyzes the phosphorolysis of single-stranded polyribonucleotides processively in the 3'- to 5'-direction. This is Polyribonucleotide nucleotidyltransferase from Anaplasma marginale (strain St. Maries).